The sequence spans 343 residues: Flavonoid 4'-O-methyltransferase 4 (343 aa).

An S-adenosyl-L-methionine-binding site is contributed by aspartate 211. Histidine 249 serves as the catalytic Proton acceptor.

Belongs to the class I-like SAM-binding methyltransferase superfamily. Cation-independent O-methyltransferase family. In terms of assembly, homodimer.

The enzyme catalyses apigenin + S-adenosyl-L-methionine = acacetin + S-adenosyl-L-homocysteine + H(+). It carries out the reaction kaempferol + S-adenosyl-L-methionine = kaempferide + S-adenosyl-L-homocysteine + H(+). The catalysed reaction is isorhamnetin + S-adenosyl-L-methionine = 3',4'-O-dimethylquercetin + S-adenosyl-L-homocysteine + 2 H(+). It catalyses the reaction scutellarein + S-adenosyl-L-methionine = scutellarein 4'-methyl ether + S-adenosyl-L-homocysteine + H(+). The enzyme catalyses (2S)-naringenin + S-adenosyl-L-methionine = (2S)-naringenin 4'-methyl ether + S-adenosyl-L-homocysteine + H(+). It carries out the reaction 4',7,8-trihydroxyflavone + S-adenosyl-L-methionine = 7,8-dihydroxy-4'-methoxyflavone + S-adenosyl-L-homocysteine + H(+). The catalysed reaction is taxifolin + S-adenosyl-L-methionine = taxifolin 4'-methyl ether + S-adenosyl-L-homocysteine + H(+). Its pathway is flavonoid metabolism. Functionally, flavonoid 4'-O-methyltransferase involved in the biosynthesis of polymethoxylated flavonoids natural products such as pebrellin, aroma compounds which contribute to the flavor of peppermint, and exhibit pharmacological activities such as anti-allergic, anti-oxidant, antibacterial, anti-proliferative, and anti-inflammatory effects. Catalyzes S-adenosylmethionine-dependent regioselective 4'-O-methylation of flavonoids; active on various hydroxylated flavonoid substrates, including isorhamnetin, kaempferol, apigenin (API), scutellarein (6-hydroxy-apigenin, 6-OH-API, SCU), taxifolin, 7,8,4'-trihydroxy-flavone and naringenin (NAR), and, with a lower efficiency, quercetin, rhamnetin, luteolin (LUT) and 7,8,3',4'-tetrahydroxy-flavone. This Mentha piperita (Peppermint) protein is Flavonoid 4'-O-methyltransferase 4.